The following is a 354-amino-acid chain: Protein RecA (354 aa).

67–74 lines the ATP pocket; it reads GPESSGKT.

The protein belongs to the RecA family.

It localises to the cytoplasm. Functionally, can catalyze the hydrolysis of ATP in the presence of single-stranded DNA, the ATP-dependent uptake of single-stranded DNA by duplex DNA, and the ATP-dependent hybridization of homologous single-stranded DNAs. It interacts with LexA causing its activation and leading to its autocatalytic cleavage. This chain is Protein RecA, found in Haemophilus influenzae (strain 86-028NP).